The chain runs to 191 residues: Pyridoxal 5'-phosphate synthase subunit PdxT (191 aa).

48-50 (GES) is an L-glutamine binding site. Cysteine 81 acts as the Nucleophile in catalysis. Residues arginine 109 and 136–137 (IR) contribute to the L-glutamine site. Active-site charge relay system residues include histidine 172 and glutamate 174.

Belongs to the glutaminase PdxT/SNO family. In the presence of PdxS, forms a dodecamer of heterodimers. Only shows activity in the heterodimer.

The enzyme catalyses aldehydo-D-ribose 5-phosphate + D-glyceraldehyde 3-phosphate + L-glutamine = pyridoxal 5'-phosphate + L-glutamate + phosphate + 3 H2O + H(+). The catalysed reaction is L-glutamine + H2O = L-glutamate + NH4(+). It participates in cofactor biosynthesis; pyridoxal 5'-phosphate biosynthesis. Functionally, catalyzes the hydrolysis of glutamine to glutamate and ammonia as part of the biosynthesis of pyridoxal 5'-phosphate. The resulting ammonia molecule is channeled to the active site of PdxS. The polypeptide is Pyridoxal 5'-phosphate synthase subunit PdxT (Thermus thermophilus (strain ATCC BAA-163 / DSM 7039 / HB27)).